The sequence spans 559 residues: Tryprostatin B 6-hydroxylase (559 aa).

Helical transmembrane passes span 13–35 (PSVM…HLSY), 48–65 (YVRF…LLYA), and 82–104 (VSLL…RTLF). Cysteine 502 lines the heme pocket.

It belongs to the cytochrome P450 family. It depends on heme as a cofactor.

Its subcellular location is the membrane. The enzyme catalyses tryprostatin B + reduced [NADPH--hemoprotein reductase] + O2 = 6-hydroxytryprostatin B + oxidized [NADPH--hemoprotein reductase] + H2O + H(+). The protein operates within mycotoxin biosynthesis. Functionally, cytochrome P450 monooxygenase; part of the gene cluster that mediates the biosynthesis of fumitremorgins, indole alkaloids that carry not only intriguing chemical structures, but also interesting biological and pharmacological activities. The biosynthesis of fumitremorgin-type alkaloids begins by condensation of the two amino acids L-tryptophan and L-proline to brevianamide F, catalyzed by the non-ribosomal peptide synthetase ftmA. Brevianamide F is then prenylated by the prenyltransferase ftmPT1/ftmB in the presence of dimethylallyl diphosphate, resulting in the formation of tryprostatin B. The three cytochrome P450 monooxygenases, ftmP450-1/ftmC, ftmP450-2/ftmE and ftmP450-3/FtmG, are responsible for the conversion of tryprostatin B to 6-hydroxytryprostatin B, tryprostatin A to fumitremorgin C and fumitremorgin C to 12,13-dihydroxyfumitremorgin C, respectively. The putative methyltransferase ftmMT/ftmD is expected for the conversion of 6-hydroxytryprostatin B to tryprostatin A. FtmPT2/FtmH catalyzes the prenylation of 12,13-dihydroxyfumitre-morgin C in the presence of dimethylallyl diphosphate, resulting in the formation of fumitremorgin B. Fumitremorgin B is further converted to verruculogen by ftmOx1/ftmF via the insertion of an endoperoxide bond between the two prenyl moieties. In some fungal species, verruculogen is further converted to fumitremorgin A, but the enzymes involved in this step have not been identified yet. The sequence is that of Tryprostatin B 6-hydroxylase from Aspergillus fumigatus (Neosartorya fumigata).